Consider the following 142-residue polypeptide: Baculoviral IAP repeat-containing protein 5 (142 aa).

The BIR repeat unit spans residues 18–88 (RISTFKNWPF…KHSSGCAFLS (71 aa)). Ser20 is modified (phosphoserine; by AURKC). Position 23 is an N6-acetyllysine (Lys23). Phosphothreonine; by CDK1 and CDK15 is present on Thr34. Thr48 bears the Phosphothreonine mark. Residues Cys57, Cys60, His77, and Cys84 each contribute to the Zn(2+) site. An N6-acetyllysine mark is found at Lys90, Lys110, Lys112, and Lys115. Thr117 carries the post-translational modification Phosphothreonine; by AURKB. Position 129 is an N6-acetyllysine (Lys129).

Belongs to the IAP family. Monomer or homodimer. Exists as a homodimer in the apo state and as a monomer in the CPC-bound state. The monomer protects cells against apoptosis more efficiently than the dimer. Only the dimeric form is capable of enhancing tubulin stability in cells. When phosphorylated, interacts with LAMTOR5/HBXIP; the resulting complex binds pro-CASP9, as well as active CASP9, but much less efficiently. Component of the chromosomal passenger complex (CPC) composed of at least BIRC5/survivin, CDCA8/borealin, INCENP, AURKB or AURKC; in the complex forms a triple-helix bundle-based subcomplex with INCENP and CDCA8. Interacts with JTB. Interacts (via BIR domain) with histone H3 phosphorylated at 'Thr-3' (H3pT3). Interacts with EVI5. Interacts with GTP-bound RAN in both the S and M phases of the cell cycle. Interacts with USP9X. Interacts with tubulin. Interacts with BIRC2/c-IAP1. The acetylated form at Lys-129 interacts with STAT3. The monomeric form deacetylated at Lys-129 interacts with XPO1/CRM1. The monomeric form interacts with XIAP/BIRC4. Both the dimeric and monomeric form can interact with DIABLO/SMAC. Interacts with BIRC6/bruce. Interacts with FBXL7; this interaction facilitates the polyubiquitination and subsequent proteasomal degradation of BIRC5 by the SCF(FBXL7) E3 ubiquitin-protein ligase complex. Post-translationally, ubiquitinated by the Cul9-RING ubiquitin-protein ligase complex, leading to its degradation. Ubiquitination is required for centrosomal targeting. Deubiquitinated by USP35 or USP38; leading to stabilization. Acetylation at Lys-129 results in its homodimerization, while deacetylation promotes the formation of monomers which heterodimerize with XPO1/CRM1 which facilitates its nuclear export. The acetylated form represses STAT3 transactivation. The dynamic equilibrium between its acetylation and deacetylation at Lys-129 determines its interaction with XPO1/CRM1, its subsequent subcellular localization, and its ability to inhibit STAT3 transactivation. In terms of processing, in vitro phosphorylation at Thr-117 by AURKB prevents interaction with INCENP and localization to mitotic chromosomes. Phosphorylation at Thr-48 by CK2 is critical for its mitotic and anti-apoptotic activities. Phosphorylation at Thr-34 by CDK15 is critical for its anti-apoptotic activity. Phosphorylation at Ser-20 by AURKC is critical for regulation of proper chromosome alignment and segregation, and possibly cytokinesis.

The protein localises to the cytoplasm. The protein resides in the nucleus. It is found in the chromosome. Its subcellular location is the centromere. It localises to the cytoskeleton. The protein localises to the spindle. The protein resides in the kinetochore. It is found in the midbody. Its function is as follows. Multitasking protein that has dual roles in promoting cell proliferation and preventing apoptosis. Component of a chromosome passage protein complex (CPC) which is essential for chromosome alignment and segregation during mitosis and cytokinesis. Acts as an important regulator of the localization of this complex; directs CPC movement to different locations from the inner centromere during prometaphase to midbody during cytokinesis and participates in the organization of the center spindle by associating with polymerized microtubules. Involved in the recruitment of CPC to centromeres during early mitosis via association with histone H3 phosphorylated at 'Thr-3' (H3pT3) during mitosis. The complex with RAN plays a role in mitotic spindle formation by serving as a physical scaffold to help deliver the RAN effector molecule TPX2 to microtubules. May counteract a default induction of apoptosis in G2/M phase. The acetylated form represses STAT3 transactivation of target gene promoters. May play a role in neoplasia. Inhibitor of CASP3 and CASP7. Essential for the maintenance of mitochondrial integrity and function. The sequence is that of Baculoviral IAP repeat-containing protein 5 (BIRC5) from Felis catus (Cat).